The sequence spans 121 residues: MGSIASPSLSSSSQLLTITVEFTGGLESIFNNTRKHTLSIPATYPSPSTGEPEPTSVASLVHYLIENVMEDTRQELFVVDGAVRPGILVLINDADWELEGEEKYQIQQGDNILFVSTLHGG.

A 1-thioglycine modification is found at Gly121. A Glycyl lysine isopeptide (Gly-Lys) (interchain with K-? in acceptor proteins) cross-link involves residue Gly121.

Belongs to the URM1 family. Post-translationally, C-terminal thiocarboxylation occurs in 2 steps, it is first acyl-adenylated (-COAMP) via the hesA/moeB/thiF part of UBA4, then thiocarboxylated (-COSH) via the rhodanese domain of UBA4.

Its subcellular location is the cytoplasm. It participates in tRNA modification; 5-methoxycarbonylmethyl-2-thiouridine-tRNA biosynthesis. Acts as a sulfur carrier required for 2-thiolation of mcm(5)S(2)U at tRNA wobble positions of cytosolic tRNA(Lys), tRNA(Glu) and tRNA(Gln). Serves as sulfur donor in tRNA 2-thiolation reaction by being thiocarboxylated (-COSH) at its C-terminus by the MOCS3 homolog UBA4. The sulfur is then transferred to tRNA to form 2-thiolation of mcm(5)S(2)U. Prior mcm(5) tRNA modification by the elongator complex is required for 2-thiolation. Also acts as a ubiquitin-like protein (UBL) that is covalently conjugated via an isopeptide bond to lysine residues of target proteins such as AHP1. The thiocarboxylated form serves as substrate for conjugation and oxidative stress specifically induces the formation of UBL-protein conjugates. The sequence is that of Ubiquitin-related modifier 1 from Ajellomyces capsulatus (strain NAm1 / WU24) (Darling's disease fungus).